The following is a 919-amino-acid chain: Puromycin-sensitive aminopeptidase (919 aa).

Residues Glu-180 and 316–320 (GAMEN) contribute to the substrate site. Position 352 (His-352) interacts with Zn(2+). The active-site Proton acceptor is Glu-353. The Zn(2+) site is built by His-356 and Glu-375. Position 464 is a 3'-nitrotyrosine (Tyr-464). Positions 726–730 (RRRFK) match the Nuclear localization signal motif.

This sequence belongs to the peptidase M1 family. As to quaternary structure, monomer. Zn(2+) is required as a cofactor. Detected in liver, epithelium of renal tubules, epithelium of small and large intestine, gastric epithelial cells, and alveoli of the lung (at protein level).

Its subcellular location is the cytoplasm. The protein localises to the cytosol. It is found in the nucleus. It carries out the reaction Release of an N-terminal amino acid, preferentially alanine, from a wide range of peptides, amides and arylamides.. Strongly inhibited by bestatin, leuhistin, actinonin, amastatin, 1,10-phenanthroline, DFP, PCMBS, Zn(2+), Cd(2+), Co(2+), Cu(2+), Hg(2+), EDTA and puromycin. Not inhibited by PMSF, and only slightly inhibited by leupeptin and aprotinin. Activity is increased by Mg(2+) and Ca(2+). Functionally, aminopeptidase with broad substrate specificity for several peptides. Involved in proteolytic events essential for cell growth and viability. May act as regulator of neuropeptide activity. Plays a role in the antigen-processing pathway for MHC class I molecules. Involved in the N-terminal trimming of cytotoxic T-cell epitope precursors. Digests the poly-Q peptides found in many cellular proteins. Digests tau from normal brain more efficiently than tau from Alzheimer disease brain. This Homo sapiens (Human) protein is Puromycin-sensitive aminopeptidase (NPEPPS).